Here is a 620-residue protein sequence, read N- to C-terminus: MATREHELRPEQERLGEDREEYEDGEEEEEEEEEEEGWDDWESDGDDAGGGGGGLLCLFCSARFDSESSLFSHCASEHRFDFYRVVKETGMDFYGCIKLINFVRSKVAENKCWSCGQVFSSNSELCGHLHALEIPQLEGKVPWGDDVYLKPFLEDDSLLHSLSVFDDDDEDDCGMPMEKGGCSAGNGSLAETCESNLKSIINDGSDVIDRFERTCTIESTDGECSGSLAQEPSDKQLKIARASAAARGINSVDESYFGSYSSFGIHREMLGDKVRTEAYRDALLGNPSLMNGATVLDVGCGTGILSLFAAKAGASRVIAVDGSAKMVSVATEVTKSNGFLYDENMEMQQKRDTQVITVVHTKAEELNHKIQVPSNKFDVLVSEWMGYCLLYESMLSSVLYARDHFLKPGGAILPDTATIFGAGFGKGGTSLPFWENVYGFDMSCIGKEVTGNSARFPVVDILASEDIVTETAVLNSFDLATMKENEMDFTSSFELRLSESGVSPSGVTWCYGIILWFDTGFTNRFCKEKPVNLSTSPFSTPTHWSQTIFTFEEPIAMAKEESAVVSSASVGTDECPAVMIRSRISIVRASEHRSIDISIETTGISSDGRKRSWPVQIFNL.

The segment covering 1-17 (MATREHELRPEQERLGE) has biased composition (basic and acidic residues). Residues 1-45 (MATREHELRPEQERLGEDREEYEDGEEEEEEEEEEEGWDDWESDG) form a disordered region. Residues 18–45 (DREEYEDGEEEEEEEEEEEGWDDWESDG) are compositionally biased toward acidic residues. The C2H2-type 1 zinc-finger motif lies at 55-78 (LLCLFCSARFDSESSLFSHCASEH). A C2H2-type 2; degenerate zinc finger spans residues 110 to 137 (NKCWSCGQVFSSNSELCGHLHALEIPQL). The 330-residue stretch at 253-582 (DESYFGSYSS…DECPAVMIRS (330 aa)) folds into the SAM-dependent MTase PRMT-type domain. S-adenosyl-L-homocysteine is bound by residues Arg-275, Gly-299, Asp-321, Ser-323, and Glu-364. Residues Glu-383 and Glu-392 contribute to the active site.

Belongs to the class I-like SAM-binding methyltransferase superfamily. Protein arginine N-methyltransferase family.

Its subcellular location is the cytoplasm. It localises to the cytosol. The catalysed reaction is L-arginyl-[protein] + S-adenosyl-L-methionine = N(omega)-methyl-L-arginyl-[protein] + S-adenosyl-L-homocysteine + H(+). The enzyme catalyses L-arginyl-[protein] + 2 S-adenosyl-L-methionine = N(omega),N(omega)-dimethyl-L-arginyl-[protein] + 2 S-adenosyl-L-homocysteine + 2 H(+). Protein-arginine N-methyltransferase that catalyzes both the monomethylation and asymmetric dimethylation of the guanidino nitrogens of arginine residues in target proteins, and therefore falls into the group of type I methyltransferases. This chain is Probable protein arginine N-methyltransferase 3 (PRMT3), found in Oryza sativa subsp. indica (Rice).